We begin with the raw amino-acid sequence, 757 residues long: Tyrosine-protein kinase HTK16 (757 aa).

The 93-residue stretch at 10-102 (WYHGKITREV…GLPCKLVDFC (93 aa)) folds into the SH2 1 domain. ANK repeat units lie at residues 115 to 147 (GLDT…NVNA), 151 to 180 (SGLT…DASA), 184 to 214 (NGRT…DFLK), 219 to 248 (NGWV…SMYP), and 252 to 281 (DGDT…NQPK). The region spanning 287–379 (WLHQNLDRNG…GLPTLLQFPV (93 aa)) is the SH2 2 domain. Disordered stretches follow at residues 381–407 (SAEN…PSRP) and 444–467 (PKLP…QKGD). Over residues 455 to 467 (EVPNSVNVGQKGD) the composition is skewed to polar residues. The 257-residue stretch at 484–740 (ISFGKELGVG…PTFNELHSTF (257 aa)) folds into the Protein kinase domain. Residues 490–498 (LGVGEFGSV) and lysine 516 contribute to the ATP site. Aspartate 608 acts as the Proton acceptor in catalysis. Residue tyrosine 746 is modified to Phosphotyrosine.

The protein belongs to the protein kinase superfamily. Tyr protein kinase family. In terms of tissue distribution, epithelial cells.

The enzyme catalyses L-tyrosyl-[protein] + ATP = O-phospho-L-tyrosyl-[protein] + ADP + H(+). Functionally, may be involved in signal transduction. The protein is Tyrosine-protein kinase HTK16 (HTK16) of Hydra vulgaris (Hydra).